Here is a 397-residue protein sequence, read N- to C-terminus: Phosphoglycerate kinase (397 aa).

Substrate-binding positions include 21 to 23, arginine 37, 60 to 63, arginine 119, and arginine 152; these read DFN and HLGR. ATP-binding positions include lysine 203, glycine 294, glutamate 325, and 354–357; that span reads GGDS.

This sequence belongs to the phosphoglycerate kinase family. As to quaternary structure, monomer.

Its subcellular location is the cytoplasm. It carries out the reaction (2R)-3-phosphoglycerate + ATP = (2R)-3-phospho-glyceroyl phosphate + ADP. Its pathway is carbohydrate degradation; glycolysis; pyruvate from D-glyceraldehyde 3-phosphate: step 2/5. This is Phosphoglycerate kinase from Chlorobium chlorochromatii (strain CaD3).